We begin with the raw amino-acid sequence, 103 residues long: Small ribosomal subunit protein uS10 (103 aa).

Belongs to the universal ribosomal protein uS10 family. As to quaternary structure, part of the 30S ribosomal subunit.

In terms of biological role, involved in the binding of tRNA to the ribosomes. The chain is Small ribosomal subunit protein uS10 from Pelodictyon phaeoclathratiforme (strain DSM 5477 / BU-1).